The following is a 271-amino-acid chain: Putative pyruvate, phosphate dikinase regulatory protein 2 (271 aa).

151 to 158 is a binding site for ADP; sequence GVSRTSKT.

Belongs to the pyruvate, phosphate/water dikinase regulatory protein family. PDRP subfamily.

It carries out the reaction N(tele)-phospho-L-histidyl/L-threonyl-[pyruvate, phosphate dikinase] + ADP = N(tele)-phospho-L-histidyl/O-phospho-L-threonyl-[pyruvate, phosphate dikinase] + AMP + H(+). The catalysed reaction is N(tele)-phospho-L-histidyl/O-phospho-L-threonyl-[pyruvate, phosphate dikinase] + phosphate + H(+) = N(tele)-phospho-L-histidyl/L-threonyl-[pyruvate, phosphate dikinase] + diphosphate. In terms of biological role, bifunctional serine/threonine kinase and phosphorylase involved in the regulation of the pyruvate, phosphate dikinase (PPDK) by catalyzing its phosphorylation/dephosphorylation. The protein is Putative pyruvate, phosphate dikinase regulatory protein 2 of Staphylococcus haemolyticus (strain JCSC1435).